A 368-amino-acid chain; its full sequence is AAVRASPDLLGSRGEDTASDGSVVWAKPYTFRAPPTPGQNSLQRIIVFGDMGKAERDGSNEFANYQPGSLNTTDRLIEDLDNYDIVFHIGDMPYANGYLSQWDQFTAQVAPISAKKPYMVASGNHERDWPNTGGFFDVKDSGGECGVPAETMYYYPAENRANFWYKVDYGMFRFCVGDSEHDWREGTPQYKFIEECLSTVDRKHQPWLIFTAHRVLGYSSNSWYADQGSFEEPEGRESLQKLWQRYRVDIAYFGHVHNYERTCPLYQSQCVNADKTHYSGTMNGTIFVVAGGGGSHLSSYTTAIPKWSIFRDHDYGFTKLTAFNHSSLLFEYMKSSDGKVYDSFTIHRDYRDVLSCVHDSCFPTTLAS.

This sequence belongs to the metallophosphoesterase superfamily. Monomer and homomer. In terms of processing, glycosylated.

The protein localises to the plastid. The protein resides in the chloroplast. In terms of biological role, hydrolyzes pyrophosphate, phosphodiester and phosphosulfate linkages of nucleotide-sugars, sulfonucleotides and nucleoside di and triphosphates. Highest activity observed with the substrates ADP-glucose and adenosine 5'-phosphosulfate. The polypeptide is Nucleotide pyrophosphatase/phosphodiesterase (Hordeum vulgare (Barley)).